Here is a 505-residue protein sequence, read N- to C-terminus: Deoxyguanosinetriphosphate triphosphohydrolase (505 aa).

An HD domain is found at 66-273 (RLTHSMEVQQ…MEAADDISYC (208 aa)).

This sequence belongs to the dGTPase family. Type 1 subfamily. In terms of assembly, homotetramer. The cofactor is Mg(2+).

The enzyme catalyses dGTP + H2O = 2'-deoxyguanosine + triphosphate + H(+). DGTPase preferentially hydrolyzes dGTP over the other canonical NTPs. The sequence is that of Deoxyguanosinetriphosphate triphosphohydrolase from Salmonella paratyphi A (strain AKU_12601).